The sequence spans 137 residues: Putative mucosal pentraxin homolog (137 aa).

A Pentraxin (PTX) domain is found at 1-137 (MGMYLLHIGN…YVVTKPKVWA (137 aa)). Ca(2+) contacts are provided by glutamate 73, aspartate 75, and glutamine 85.

Belongs to the pentraxin family. As to expression, not expressed in the intestinal tract including ascending colon, descending colon and rectum. Not expressed in the human colon cancer cell lines HT-29 and CaCo-2.

This Homo sapiens (Human) protein is Putative mucosal pentraxin homolog (MPTX1).